Consider the following 411-residue polypeptide: Arginine deiminase (411 aa).

Residue Cys-401 is the Amidino-cysteine intermediate of the active site.

This sequence belongs to the arginine deiminase family.

The protein resides in the cytoplasm. It catalyses the reaction L-arginine + H2O = L-citrulline + NH4(+). The protein operates within amino-acid degradation; L-arginine degradation via ADI pathway; carbamoyl phosphate from L-arginine: step 1/2. This is Arginine deiminase from Streptococcus equi subsp. equi (strain 4047).